The primary structure comprises 441 residues: Peroxisome proliferator-activated receptor delta (441 aa).

The interval 1–58 (MEQPPGEAAEVREEEEKKEVAEAEGAPELNGGPERSLPSSSYTDLSRSSSPPSLLDQL) is disordered. Residues 9-21 (AEVREEEEKKEVA) are compositionally biased toward basic and acidic residues. Low complexity predominate over residues 36 to 55 (SLPSSSYTDLSRSSSPPSLL). The nuclear receptor DNA-binding region spans 70–145 (LNMECRVCGD…LGMSHNAIRF (76 aa)). NR C4-type zinc fingers lie at residues 74-94 (CRVC…CEGC) and 111-133 (CERI…FQKC). Residues 211 to 439 (FVIHDIETLW…HPLLQEIYKD (229 aa)) enclose the NR LBD domain.

Belongs to the nuclear hormone receptor family. NR1 subfamily. In terms of assembly, heterodimer with the retinoid X receptor. Interacts (via domain NR LBD) with CRY1 and CRY2 in a ligand-dependent manner. In terms of processing, 'Lys-48'-linked polyubiquitinated; leading to proteasomal degradation. Deubiquitinated and stabilized by OTUD3.

It localises to the nucleus. Its function is as follows. Ligand-activated transcription factor key mediator of energy metabolism in adipose tissues. Receptor that binds peroxisome proliferators such as hypolipidemic drugs and fatty acids. Has a preference for poly-unsaturated fatty acids, such as gamma-linoleic acid and eicosapentanoic acid. Once activated by a ligand, the receptor binds to promoter elements of target genes. Regulates the peroxisomal beta-oxidation pathway of fatty acids. Functions as a transcription activator for the acyl-CoA oxidase gene. Decreases expression of NPC1L1 once activated by a ligand. The polypeptide is Peroxisome proliferator-activated receptor delta (PPARD) (Canis lupus familiaris (Dog)).